We begin with the raw amino-acid sequence, 211 residues long: Uracil phosphoribosyltransferase (211 aa).

Residues Arg78, Arg103, and 130–138 (DPMLATGNS) contribute to the 5-phospho-alpha-D-ribose 1-diphosphate site. Residues Ile193 and 198–200 (GDA) each bind uracil. Asp199 contributes to the 5-phospho-alpha-D-ribose 1-diphosphate binding site.

The protein belongs to the UPRTase family. Mg(2+) is required as a cofactor.

It carries out the reaction UMP + diphosphate = 5-phospho-alpha-D-ribose 1-diphosphate + uracil. The protein operates within pyrimidine metabolism; UMP biosynthesis via salvage pathway; UMP from uracil: step 1/1. Allosterically activated by GTP. Catalyzes the conversion of uracil and 5-phospho-alpha-D-ribose 1-diphosphate (PRPP) to UMP and diphosphate. In Acinetobacter baumannii (strain AB307-0294), this protein is Uracil phosphoribosyltransferase.